A 376-amino-acid polypeptide reads, in one-letter code: MTQANNHANNHAMNIGVFIPIGNNGWLLSENAPQYMPSFELNKQITLKAEQYGLDFALSMIKLRGFGGKTEFWDHNLESFTLMAGLAAVTSRIKLYATAPTLCLPPAIVARMASTIDSISNGRFGLNLVTGWQRPEYSQMGLWPGDEYFGRRYAYLSEYAQVLRDLWETGSSDLKGEFFQMEDCRLSPRPQAEMKIICAGQSAAGMAFTATYADYNFCFGKGVNTPTAFAPTVERLEEAKAKTGRDVSSYVLFMIISDETDEAARAKWEHYKAGADQEAIAWLGLQGAADTKSGADTNIRQMADPTSAVNINMGTLVGSYATVAALLDEVVTVPGTGGVLLVFDDFLKGLDDFGTKIQPLMASRRHVTGEALAEVA.

FMN contacts are provided by residues 61 to 62 (IK), N127, E136, 152 to 153 (RY), and S202.

The protein belongs to the NtaA/SnaA/DszA monooxygenase family. RutA subfamily.

The enzyme catalyses uracil + FMNH2 + NADH + O2 = (Z)-3-ureidoacrylate + FMN + NAD(+) + H2O + H(+). It catalyses the reaction thymine + FMNH2 + NADH + O2 = (Z)-2-methylureidoacrylate + FMN + NAD(+) + H2O + H(+). Functionally, catalyzes the pyrimidine ring opening between N-3 and C-4 by an unusual flavin hydroperoxide-catalyzed mechanism, adding oxygen atoms in the process to yield ureidoacrylate peracid, that immediately reacts with FMN forming ureidoacrylate and FMN-N(5)-oxide. The FMN-N(5)-oxide reacts spontaneously with NADH to produce FMN. Requires the flavin reductase RutF to regenerate FMN in vivo. This Methylorubrum populi (strain ATCC BAA-705 / NCIMB 13946 / BJ001) (Methylobacterium populi) protein is Pyrimidine monooxygenase RutA.